The sequence spans 55 residues: Large ribosomal subunit protein bL33 (55 aa).

Belongs to the bacterial ribosomal protein bL33 family.

This is Large ribosomal subunit protein bL33 from Beijerinckia indica subsp. indica (strain ATCC 9039 / DSM 1715 / NCIMB 8712).